The following is a 237-amino-acid chain: Necrosis-inducing protein NPP1 (237 aa).

An N-terminal signal peptide occupies residues 1–19 (MNVLTFLIAAAVSLAVVQA). Asparagine 67 carries an N-linked (GlcNAc...) asparagine glycan. The Conserved undecapeptide motif signature appears at 103 to 113 (AIMYSWYFPKD). The short motif at 120–126 (GHRHDWE) is the Conserved heptapetpide motif element.

It belongs to the Necrosis inducing protein (NPP1) family.

It is found in the secreted. Secreted effector that acts as a pathogen-associated molecular pattern (PAMP) recognized by the plant immune system. Induces necrotic cell death and ethylene biosynthesis in parsley. Stimulates early induced host cellular responses implicated in elicitor signal transmission such as increased levels of cytoplasmic calcium, production of reactive oxygen species (ROS), and MAP kinase activation. Infiltration of NPP1 into leaves of Arabidopsis thaliana results in transcript accumulation of pathogenesis-related (PR) genes, production of ROS and ethylene, callose apposition, and hypersensitive response (HR)-like cell death. NPP1-mediated induction of the PR1 gene is salicylic acid-dependent, and requires both functional NDR1 and PAD4. The polypeptide is Necrosis-inducing protein NPP1 (Phytophthora nicotianae (Potato buckeye rot agent)).